The chain runs to 391 residues: Probable sugar efflux transporter (391 aa).

Helical transmembrane passes span 16 to 36 (VFVF…PVAL), 51 to 71 (VGLM…PLML), 82 to 102 (LLFL…AWNF), 110 to 130 (MGIA…VIRV), 138 to 158 (QALG…LPLG), 170 to 190 (TFGV…KLLP), 210 to 230 (PLLM…FTTY), 247 to 267 (ITTL…FLFG), 277 to 297 (FIAF…VFKN), 300 to 320 (WVVF…GISL), 338 to 358 (IYSG…SIVI), and 361 to 381 (LGLG…LFWL).

It belongs to the major facilitator superfamily. SotB (TC 2.A.1.2) family.

It is found in the cell inner membrane. In terms of biological role, involved in the efflux of sugars. The physiological role may be the reduction of the intracellular concentration of toxic sugars or sugar metabolites. The protein is Probable sugar efflux transporter of Helicobacter pylori (strain ATCC 700392 / 26695) (Campylobacter pylori).